The primary structure comprises 216 residues: Large ribosomal subunit protein uL1 (216 aa).

This sequence belongs to the universal ribosomal protein uL1 family.

This is Large ribosomal subunit protein uL1 from Caenorhabditis elegans.